The chain runs to 539 residues: CTP synthase (539 aa).

Residues 1-268 (MSFKSIFLTG…SDFLLNKLGF (268 aa)) are amidoligase domain. Ser14 contacts CTP. Residue Ser14 participates in UTP binding. 15–20 (SLGKGL) lines the ATP pocket. L-glutamine is bound at residue Tyr55. Position 72 (Asp72) interacts with ATP. Mg(2+)-binding residues include Asp72 and Glu142. CTP contacts are provided by residues 149–151 (DIE), 188–193 (KTKPTQ), and Lys224. UTP contacts are provided by residues 188–193 (KTKPTQ) and Lys224. One can recognise a Glutamine amidotransferase type-1 domain in the interval 294–532 (RIGLVGKYLE…IRAAKAYSLE (239 aa)). Gly353 provides a ligand contact to L-glutamine. Cys380 functions as the Nucleophile; for glutamine hydrolysis in the catalytic mechanism. Residues 381–384 (LGMQ), Glu404, and Arg460 contribute to the L-glutamine site. Catalysis depends on residues His505 and Glu507.

Belongs to the CTP synthase family. In terms of assembly, homotetramer.

The enzyme catalyses UTP + L-glutamine + ATP + H2O = CTP + L-glutamate + ADP + phosphate + 2 H(+). It catalyses the reaction L-glutamine + H2O = L-glutamate + NH4(+). It carries out the reaction UTP + NH4(+) + ATP = CTP + ADP + phosphate + 2 H(+). Its pathway is pyrimidine metabolism; CTP biosynthesis via de novo pathway; CTP from UDP: step 2/2. Allosterically activated by GTP, when glutamine is the substrate; GTP has no effect on the reaction when ammonia is the substrate. The allosteric effector GTP functions by stabilizing the protein conformation that binds the tetrahedral intermediate(s) formed during glutamine hydrolysis. Inhibited by the product CTP, via allosteric rather than competitive inhibition. Functionally, catalyzes the ATP-dependent amination of UTP to CTP with either L-glutamine or ammonia as the source of nitrogen. Regulates intracellular CTP levels through interactions with the four ribonucleotide triphosphates. In Chlamydia trachomatis serovar A (strain ATCC VR-571B / DSM 19440 / HAR-13), this protein is CTP synthase.